Here is a 157-residue protein sequence, read N- to C-terminus: Small ribosomal subunit protein uS7 (157 aa).

It belongs to the universal ribosomal protein uS7 family. Part of the 30S ribosomal subunit. Contacts proteins S9 and S11.

Functionally, one of the primary rRNA binding proteins, it binds directly to 16S rRNA where it nucleates assembly of the head domain of the 30S subunit. Is located at the subunit interface close to the decoding center, probably blocks exit of the E-site tRNA. This Delftia acidovorans (strain DSM 14801 / SPH-1) protein is Small ribosomal subunit protein uS7.